A 114-amino-acid chain; its full sequence is Notch-regulated ankyrin repeat-containing protein (114 aa).

ANK repeat units follow at residues 50–79 (EGQT…DIRL) and 83–112 (DGWS…YSSS).

The protein belongs to the NRARP family. Forms a ternary complex with the intracellular domain (ICD) of notch1 and rbpj/suh.

Promotes loss of intracellular domain (ICD) of Notch1 in embryos. By down-regulating ICD levels, could function as a negative feedback regulator of Notch signaling that attenuates ICD-mediated transcription. Involved in angiogenesis. May be involved in somitogenesis. The polypeptide is Notch-regulated ankyrin repeat-containing protein (nrarp) (Xenopus tropicalis (Western clawed frog)).